The following is a 134-amino-acid chain: Profilin-5 (134 aa).

An intrachain disulfide couples Cys13 to Cys118. Positions 84–100 match the Involved in PIP2 interaction motif; it reads AVIRGKKGSGGITIKKT. The residue at position 114 (Thr114) is a Phosphothreonine.

It belongs to the profilin family. As to quaternary structure, occurs in many kinds of cells as a complex with monomeric actin in a 1:1 ratio. In terms of processing, phosphorylated by MAP kinases.

The protein resides in the cytoplasm. Its subcellular location is the cytoskeleton. Its function is as follows. Binds to actin and affects the structure of the cytoskeleton. At high concentrations, profilin prevents the polymerization of actin, whereas it enhances it at low concentrations. The polypeptide is Profilin-5 (Olea europaea (Common olive)).